Consider the following 156-residue polypeptide: Deoxyuridine 5'-triphosphate nucleotidohydrolase (156 aa).

Residues 76–78, Asn-89, 93–95, and Lys-103 contribute to the substrate site; these read RSG and TVD.

This sequence belongs to the dUTPase family. The cofactor is Mg(2+).

It catalyses the reaction dUTP + H2O = dUMP + diphosphate + H(+). The protein operates within pyrimidine metabolism; dUMP biosynthesis; dUMP from dCTP (dUTP route): step 2/2. Functionally, this enzyme is involved in nucleotide metabolism: it produces dUMP, the immediate precursor of thymidine nucleotides and it decreases the intracellular concentration of dUTP so that uracil cannot be incorporated into DNA. This is Deoxyuridine 5'-triphosphate nucleotidohydrolase from Rhizobium etli (strain CIAT 652).